Here is a 288-residue protein sequence, read N- to C-terminus: Proteasome subunit beta (288 aa).

The propeptide at 1-60 is removed in mature form; by autocatalysis; the sequence is MESNADWGSRGGLPQAFLTPGISSFSEFLKGFAPEYLPSGRPLPGGLGSASAAGDIAPHG. The Nucleophile role is filled by T61.

This sequence belongs to the peptidase T1B family. As to quaternary structure, the 20S proteasome core is composed of 14 alpha and 14 beta subunits that assemble into four stacked heptameric rings, resulting in a barrel-shaped structure. The two inner rings, each composed of seven catalytic beta subunits, are sandwiched by two outer rings, each composed of seven alpha subunits. The catalytic chamber with the active sites is on the inside of the barrel. Has a gated structure, the ends of the cylinder being occluded by the N-termini of the alpha-subunits. Is capped by the proteasome-associated ATPase, ARC.

Its subcellular location is the cytoplasm. It carries out the reaction Cleavage of peptide bonds with very broad specificity.. It participates in protein degradation; proteasomal Pup-dependent pathway. With respect to regulation, the formation of the proteasomal ATPase ARC-20S proteasome complex, likely via the docking of the C-termini of ARC into the intersubunit pockets in the alpha-rings, may trigger opening of the gate for substrate entry. Interconversion between the open-gate and close-gate conformations leads to a dynamic regulation of the 20S proteasome proteolysis activity. Component of the proteasome core, a large protease complex with broad specificity involved in protein degradation. This is Proteasome subunit beta from Catenulispora acidiphila (strain DSM 44928 / JCM 14897 / NBRC 102108 / NRRL B-24433 / ID139908).